Consider the following 402-residue polypeptide: Nicotinate phosphoribosyltransferase (402 aa).

At histidine 224 the chain carries Phosphohistidine; by autocatalysis.

It belongs to the NAPRTase family. Transiently phosphorylated on a His residue during the reaction cycle. Phosphorylation strongly increases the affinity for substrates and increases the rate of nicotinate D-ribonucleotide production. Dephosphorylation regenerates the low-affinity form of the enzyme, leading to product release.

It catalyses the reaction nicotinate + 5-phospho-alpha-D-ribose 1-diphosphate + ATP + H2O = nicotinate beta-D-ribonucleotide + ADP + phosphate + diphosphate. The protein operates within cofactor biosynthesis; NAD(+) biosynthesis; nicotinate D-ribonucleotide from nicotinate: step 1/1. Its function is as follows. Catalyzes the synthesis of beta-nicotinate D-ribonucleotide from nicotinate and 5-phospho-D-ribose 1-phosphate at the expense of ATP. The sequence is that of Nicotinate phosphoribosyltransferase from Neisseria gonorrhoeae (strain ATCC 700825 / FA 1090).